A 717-amino-acid chain; its full sequence is Asp/Glu-specific dipeptidyl-peptidase (717 aa).

The signal sequence occupies residues 1 to 21; the sequence is MNKRFFPTLLLAFVCSTLAYA. Active-site charge relay system residues include H85, D226, and S652.

The protein belongs to the peptidase S46 family.

It localises to the secreted. It is found in the cell surface. Its activity is regulated as follows. Enzyme activity is completely blocked by diisopropyl-fluorophosphates, moderately by phenylmethylsulfonyl fluoride (PMSF) and 4-(2-methyl)benzenesulfonyl fluoride, and slightly by pepstatin in vitro. Functionally, catalyzes the removal of dipeptides from the N-terminus of oligopeptides. Shows a strict specificity for acidic residues (Asp or Glu) in the P1 position, and has a hydrophobic residue preference at the P2 position. Is likely involved in amino acid metabolism and bacterial growth/survival of asaccharolytic P.endodontalis, that utilizes amino acids from extracellular proteinaceous nutrients as energy and carbon sources. The chain is Asp/Glu-specific dipeptidyl-peptidase (dpp11) from Porphyromonas endodontalis (strain ATCC 35406 / DSM 24491 / JCM 8526 / CCUG 16442 / BCRC 14492 / NCTC 13058 / HG 370) (Bacteroides endodontalis).